The chain runs to 239 residues: tRNA (guanine-N(7)-)-methyltransferase (239 aa).

4 residues coordinate S-adenosyl-L-methionine: Glu68, Glu93, Asp120, and Asp143. The active site involves Asp143. Substrate is bound by residues Lys147, Asp180, and 217–220; that span reads TKFE.

This sequence belongs to the class I-like SAM-binding methyltransferase superfamily. TrmB family.

It carries out the reaction guanosine(46) in tRNA + S-adenosyl-L-methionine = N(7)-methylguanosine(46) in tRNA + S-adenosyl-L-homocysteine. Its pathway is tRNA modification; N(7)-methylguanine-tRNA biosynthesis. Catalyzes the formation of N(7)-methylguanine at position 46 (m7G46) in tRNA. The sequence is that of tRNA (guanine-N(7)-)-methyltransferase from Vibrio cholerae serotype O1 (strain ATCC 39541 / Classical Ogawa 395 / O395).